We begin with the raw amino-acid sequence, 326 residues long: tRNA-modifying protein YgfZ (326 aa).

Folate is bound by residues W27 and W189.

The protein belongs to the tRNA-modifying YgfZ family.

The protein resides in the cytoplasm. Folate-binding protein involved in regulating the level of ATP-DnaA and in the modification of some tRNAs. It is probably a key factor in regulatory networks that act via tRNA modification, such as initiation of chromosomal replication. The polypeptide is tRNA-modifying protein YgfZ (Escherichia coli O139:H28 (strain E24377A / ETEC)).